The primary structure comprises 215 residues: UPF0502 protein YceH (215 aa).

The protein belongs to the UPF0502 family.

This is UPF0502 protein YceH from Salmonella paratyphi A (strain ATCC 9150 / SARB42).